A 214-amino-acid polypeptide reads, in one-letter code: Probable nicotinate-nucleotide adenylyltransferase (214 aa).

This sequence belongs to the NadD family.

The enzyme catalyses nicotinate beta-D-ribonucleotide + ATP + H(+) = deamido-NAD(+) + diphosphate. Its pathway is cofactor biosynthesis; NAD(+) biosynthesis; deamido-NAD(+) from nicotinate D-ribonucleotide: step 1/1. Functionally, catalyzes the reversible adenylation of nicotinate mononucleotide (NaMN) to nicotinic acid adenine dinucleotide (NaAD). The chain is Probable nicotinate-nucleotide adenylyltransferase from Aeromonas hydrophila subsp. hydrophila (strain ATCC 7966 / DSM 30187 / BCRC 13018 / CCUG 14551 / JCM 1027 / KCTC 2358 / NCIMB 9240 / NCTC 8049).